We begin with the raw amino-acid sequence, 80 residues long: Protein Vpu (80 aa).

Residues 1–6 (MQSLIA) are Extracellular-facing. Residues 7–27 (AIVALVVVAIIAIVVWSIVFI) form a helical membrane-spanning segment. The Cytoplasmic portion of the chain corresponds to 28–80 (EYRKILRQRKIDRLIDRIRERAEDSGNESEGDQEELSALVEMGHDAPWDIDDL). Residues 49–80 (AEDSGNESEGDQEELSALVEMGHDAPWDIDDL) form a disordered region. Phosphoserine; by host CK2 occurs at positions 52 and 56. Acidic residues predominate over residues 52-62 (SGNESEGDQEE).

This sequence belongs to the HIV-1 VPU protein family. As to quaternary structure, homopentamer. Interacts with host CD4 and BRTC; these interactions induce proteasomal degradation of CD4. Interacts with host BST2; this interaction leads to the degradation of host BST2. Interacts with host FBXW11. Interacts with host AP1M1; this interaction plays a role in the mistrafficking and subsequent degradation of host BST2. Interacts with host RANBP2; this interaction allows Vpu to down-regulate host BLM sumoylation. Phosphorylated by host CK2. This phosphorylation is necessary for interaction with human BTRC and degradation of CD4.

It is found in the host membrane. With respect to regulation, ion channel activity is inhibited by hexamethylene amiloride in vitro. Functionally, enhances virion budding by targeting host CD4 and Tetherin/BST2 to proteasome degradation. Degradation of CD4 prevents any unwanted premature interactions between viral Env and its host receptor CD4 in the endoplasmic reticulum. Degradation of antiretroviral protein Tetherin/BST2 is important for virion budding, as BST2 tethers new viral particles to the host cell membrane. Mechanistically, Vpu bridges either CD4 or BST2 to BTRC, a substrate recognition subunit of the Skp1/Cullin/F-box protein E3 ubiquitin ligase, induces their ubiquitination and subsequent proteasomal degradation. The alteration of the E3 ligase specificity by Vpu seems to promote the degradation of host IKBKB, leading to NF-kappa-B down-regulation and subsequent apoptosis. Acts as a viroporin that forms an oligomeric ion channel in membranes. Modulates the host DNA repair mechanisms to promote degradation of nuclear viral cDNA in cells that are already productively infected in order to suppress immune sensing and proviral hyper-integration (superinfection). Manipulates PML-NBs and modulates SUMOylation of host BLM protein thereby enhancing its DNA-end processing activity toward viral unintegrated linear DNA. Also inhibits RAD52-mediated homologous repair of viral cDNA, preventing the generation of dead-end circular forms of single copies of the long terminal repeat and permitting sustained nucleolytic attack. This chain is Protein Vpu, found in Human immunodeficiency virus type 1 group M subtype B (isolate JH32) (HIV-1).